The following is a 252-amino-acid chain: Small ribosomal subunit protein eS1 (252 aa).

Belongs to the eukaryotic ribosomal protein eS1 family. As to quaternary structure, component of the small ribosomal subunit. Mature ribosomes consist of a small (40S) and a large (60S) subunit. The 40S subunit contains about 33 different proteins and 1 molecule of RNA (18S). The 60S subunit contains about 49 different proteins and 3 molecules of RNA (25S, 5.8S and 5S).

The protein resides in the cytoplasm. In Enterocytozoon bieneusi (strain H348) (Microsporidian parasite), this protein is Small ribosomal subunit protein eS1.